Consider the following 556-residue polypeptide: Glutamine--tRNA ligase (556 aa).

Residues 34 to 44 (PEPNGYLHIGH) carry the 'HIGH' region motif. Residues 35–37 (EPN) and 41–47 (HIGHAKS) each bind ATP. L-glutamine contacts are provided by D67 and Y212. Residues T231, 261–262 (RL), and 269–271 (MSK) contribute to the ATP site. The 'KMSKS' region signature appears at 268 to 272 (VMSKR).

Belongs to the class-I aminoacyl-tRNA synthetase family. In terms of assembly, monomer.

Its subcellular location is the cytoplasm. The catalysed reaction is tRNA(Gln) + L-glutamine + ATP = L-glutaminyl-tRNA(Gln) + AMP + diphosphate. The sequence is that of Glutamine--tRNA ligase from Vibrio campbellii (strain ATCC BAA-1116).